Consider the following 348-residue polypeptide: Uroporphyrinogen decarboxylase (348 aa).

Substrate is bound by residues 23 to 27, Asp72, Tyr148, Ser203, and His316; that span reads RQAGR.

It belongs to the uroporphyrinogen decarboxylase family. Homodimer.

Its subcellular location is the cytoplasm. It carries out the reaction uroporphyrinogen III + 4 H(+) = coproporphyrinogen III + 4 CO2. It functions in the pathway porphyrin-containing compound metabolism; protoporphyrin-IX biosynthesis; coproporphyrinogen-III from 5-aminolevulinate: step 4/4. Functionally, catalyzes the decarboxylation of four acetate groups of uroporphyrinogen-III to yield coproporphyrinogen-III. This chain is Uroporphyrinogen decarboxylase, found in Myxococcus xanthus (strain DK1622).